The primary structure comprises 270 residues: tRNA pseudouridine synthase A (270 aa).

The active-site Nucleophile is aspartate 60. Tyrosine 118 is a substrate binding site.

Belongs to the tRNA pseudouridine synthase TruA family. In terms of assembly, homodimer.

It catalyses the reaction uridine(38/39/40) in tRNA = pseudouridine(38/39/40) in tRNA. Its function is as follows. Formation of pseudouridine at positions 38, 39 and 40 in the anticodon stem and loop of transfer RNAs. This Salmonella typhimurium (strain LT2 / SGSC1412 / ATCC 700720) protein is tRNA pseudouridine synthase A.